Consider the following 464-residue polypeptide: ATP synthase subunit beta (464 aa).

152–159 (GGAGVGKT) is an ATP binding site.

This sequence belongs to the ATPase alpha/beta chains family. As to quaternary structure, F-type ATPases have 2 components, CF(1) - the catalytic core - and CF(0) - the membrane proton channel. CF(1) has five subunits: alpha(3), beta(3), gamma(1), delta(1), epsilon(1). CF(0) has three main subunits: a(1), b(2) and c(9-12). The alpha and beta chains form an alternating ring which encloses part of the gamma chain. CF(1) is attached to CF(0) by a central stalk formed by the gamma and epsilon chains, while a peripheral stalk is formed by the delta and b chains.

The protein resides in the cell membrane. The catalysed reaction is ATP + H2O + 4 H(+)(in) = ADP + phosphate + 5 H(+)(out). In terms of biological role, produces ATP from ADP in the presence of a proton gradient across the membrane. The catalytic sites are hosted primarily by the beta subunits. In Ureaplasma parvum serovar 3 (strain ATCC 27815 / 27 / NCTC 11736), this protein is ATP synthase subunit beta.